The following is a 498-amino-acid chain: Phosphonates import ATP-binding protein PhnC (498 aa).

A disordered region spans residues 1-27 (MPQRPEAARAGPVAGPDAASKPAPGPA). Residues 28-269 (LTLRGAGRAY…DLGELYEARR (242 aa)) form the ABC transporter domain. ATP is bound at residue 60 to 67 (GPSGAGKS). Residues 270 to 498 (GAADPARAPA…LEVARAEVPP (229 aa)) form a lysR substrate binding domain region.

The protein belongs to the ABC transporter superfamily. Phosphonates importer (TC 3.A.1.9.1) family. The complex is composed of two ATP-binding proteins (PhnC), two transmembrane proteins (PhnE) and a solute-binding protein (PhnD).

It is found in the cell inner membrane. It catalyses the reaction phosphonate(out) + ATP + H2O = phosphonate(in) + ADP + phosphate + H(+). Its function is as follows. Part of the ABC transporter complex PhnCDE involved in phosphonates import. Responsible for energy coupling to the transport system. This is Phosphonates import ATP-binding protein PhnC from Anaeromyxobacter dehalogenans (strain 2CP-C).